The chain runs to 347 residues: D-alanine--D-alanine ligase (347 aa).

Residues 131–333 (KRVLESAGIA…YPELIERLVD (203 aa)) form the ATP-grasp domain. 161 to 216 (EEKLAYPVFTKPSNMGSSVGISKSENQEELRQALKLAFRYDSRVLVEQGVNAREIE) provides a ligand contact to ATP. Residues Asp287, Glu300, and Asn302 each coordinate Mg(2+).

This sequence belongs to the D-alanine--D-alanine ligase family. It depends on Mg(2+) as a cofactor. The cofactor is Mn(2+).

It is found in the cytoplasm. The catalysed reaction is 2 D-alanine + ATP = D-alanyl-D-alanine + ADP + phosphate + H(+). It functions in the pathway cell wall biogenesis; peptidoglycan biosynthesis. Functionally, cell wall formation. In Streptococcus pneumoniae serotype 19F (strain G54), this protein is D-alanine--D-alanine ligase.